The sequence spans 362 residues: Peptide chain release factor 1 (362 aa).

Q236 is modified (N5-methylglutamine).

It belongs to the prokaryotic/mitochondrial release factor family. Post-translationally, methylated by PrmC. Methylation increases the termination efficiency of RF1.

It is found in the cytoplasm. Peptide chain release factor 1 directs the termination of translation in response to the peptide chain termination codons UAG and UAA. This chain is Peptide chain release factor 1, found in Lactobacillus johnsonii (strain CNCM I-12250 / La1 / NCC 533).